A 215-amino-acid polypeptide reads, in one-letter code: Somatotropin (215 aa).

The signal sequence occupies residues 1 to 25 (MAPGMRVCLLLLIAFTLLGPQRAAA). His44 lines the Zn(2+) pocket. The residue at position 130 (Ser130) is a Phosphoserine. Zn(2+) is bound at residue Glu197.

This sequence belongs to the somatotropin/prolactin family.

The protein localises to the secreted. In terms of biological role, plays an important role in growth control. Its major role in stimulating body growth is to stimulate the liver and other tissues to secrete IGF1. It stimulates both the differentiation and proliferation of myoblasts. It also stimulates amino acid uptake and protein synthesis in muscle and other tissues. This Monodelphis domestica (Gray short-tailed opossum) protein is Somatotropin (GH1).